A 241-amino-acid chain; its full sequence is MLSFNPRLQPATLIKRYKRFLADIVTPAGEVLTIHCANTGAMTGCATPGDAVWYSTSDNPKRKYPHSWELTQTQIGDWICVNTLRANELASLAIDNNQIVELSGYTSVKREIKYGDENSRIDLLLQAENRSNCYIEVKSVTLLQQQCGYFPDAVTLRGQKHLRELQSMVANGHRAVLFFAVLHTGIRQVAAARHIDNRYAELLAQAQQAGVEVICYGFQLSPDGIALDARLPLLLDETPNS.

This sequence belongs to the SfsA family.

This is Sugar fermentation stimulation protein homolog from Yersinia enterocolitica serotype O:8 / biotype 1B (strain NCTC 13174 / 8081).